The primary structure comprises 446 residues: Chromosomal replication initiator protein DnaA (446 aa).

The segment at 1–72 is domain I, interacts with DnaA modulators; it reads MENILDLWNK…ADTIYELTGE (72 aa). Residues 72–109 are domain II; that stretch reads EELSIKFIIPQNQDEVEAMPKSPIKKMSKEDPVDIPQN. A domain III, AAA+ region region spans residues 110–326; it reads MLNPKYTFDT…GALIRVVAYS (217 aa). The ATP site is built by Gly-154, Gly-156, Lys-157, and Thr-158. The segment at 327 to 446 is domain IV, binds dsDNA; sequence SLINKDINAD…HVKEIKEQLK (120 aa).

Belongs to the DnaA family. Oligomerizes as a right-handed, spiral filament on DNA at oriC.

It is found in the cytoplasm. Plays an essential role in the initiation and regulation of chromosomal replication. ATP-DnaA binds to the origin of replication (oriC) to initiate formation of the DNA replication initiation complex once per cell cycle. Binds the DnaA box (a 9 base pair repeat at the origin) and separates the double-stranded (ds)DNA. Forms a right-handed helical filament on oriC DNA; dsDNA binds to the exterior of the filament while single-stranded (ss)DNA is stabiized in the filament's interior. The ATP-DnaA-oriC complex binds and stabilizes one strand of the AT-rich DNA unwinding element (DUE), permitting loading of DNA polymerase. After initiation quickly degrades to an ADP-DnaA complex that is not apt for DNA replication. Binds acidic phospholipids. The sequence is that of Chromosomal replication initiator protein DnaA from Bacillus pumilus (strain SAFR-032).